An 89-amino-acid chain; its full sequence is Small ribosomal subunit protein uS14A (89 aa).

The protein belongs to the universal ribosomal protein uS14 family. As to quaternary structure, part of the 30S ribosomal subunit. Contacts proteins S3 and S10.

Functionally, binds 16S rRNA, required for the assembly of 30S particles and may also be responsible for determining the conformation of the 16S rRNA at the A site. This chain is Small ribosomal subunit protein uS14A, found in Staphylococcus saprophyticus subsp. saprophyticus (strain ATCC 15305 / DSM 20229 / NCIMB 8711 / NCTC 7292 / S-41).